Here is a 707-residue protein sequence, read N- to C-terminus: Polyribonucleotide nucleotidyltransferase (707 aa).

The Mg(2+) site is built by D486 and D492. The 60-residue stretch at 553–612 folds into the KH domain; the sequence is PRIHTIKINPEKIKDVIGKGGSVIRALTEETGTTIEIEDDGTVKIAATDGDKAKHAIRRI. The S1 motif domain maps to 622–690; the sequence is GRIYQGKVTR…RQGRVRLSIK (69 aa).

The protein belongs to the polyribonucleotide nucleotidyltransferase family. Component of the RNA degradosome, which is a multiprotein complex involved in RNA processing and mRNA degradation. Requires Mg(2+) as cofactor.

It localises to the cytoplasm. It carries out the reaction RNA(n+1) + phosphate = RNA(n) + a ribonucleoside 5'-diphosphate. In terms of biological role, involved in mRNA degradation. Catalyzes the phosphorolysis of single-stranded polyribonucleotides processively in the 3'- to 5'-direction. In Edwardsiella ictaluri (strain 93-146), this protein is Polyribonucleotide nucleotidyltransferase.